Reading from the N-terminus, the 574-residue chain is Efflux pump FUB11 (574 aa).

The tract at residues 1–44 (MAIDPQPSSPSLSSETIANDTIGNDNNVNEPSVEPKTQEHQHTV) is disordered. Polar residues predominate over residues 9 to 30 (SPSLSSETIANDTIGNDNNVNE). Asparagine 19 is a glycosylation site (N-linked (GlcNAc...) asparagine). The next 11 helical transmembrane spans lie at 116-136 (VATLGISLYVLGFTFGPLIWA), 148-168 (FFFTFMVATAFSAGAAGAGSI), 176-196 (FLTGSIGSAPLSNAPALIADM), 208-228 (MFSGAPFLGPAIGPIAGGFLG), 235-255 (WLHGLMAAFTGVTWIACTVFI), 318-338 (IYISIIYGTMYMCFAAFPIVF), 348-368 (IGGLAFTGIVIGVILSIISFA), 394-414 (AIMGSLLIPIGLFWFAWTTFA), 419-439 (IVPIIGTVFFAWGLVLVFMAL), 449-469 (IFAASIMAANSALRSLFGAAF), and 484-504 (WASSIPAFLALACVPFPFLFY). Residues 552–574 (HNSHTSATHSHGHRRSLSCTRSV) form a disordered region.

It belongs to the major facilitator superfamily. DHA1 family. Polyamines/proton antiporter (TC 2.A.1.2.16) subfamily.

It localises to the cell membrane. Its function is as follows. Efflux pump involved in export of fusaric acid, a mycotoxin with low to moderate toxicity to animals and humans, but with high phytotoxic properties. Constitutes a self-protecting mechanism of the fungus against critical levels of fusaric acid within the cell. The protein is Efflux pump FUB11 of Gibberella fujikuroi (strain CBS 195.34 / IMI 58289 / NRRL A-6831) (Bakanae and foot rot disease fungus).